The chain runs to 210 residues: tRNA (guanine-N(7)-)-methyltransferase (210 aa).

E36, E61, D90, and D112 together coordinate S-adenosyl-L-methionine. The active site involves D112. Substrate is bound by residues K116, D148, and 188-191 (TEYE).

Belongs to the class I-like SAM-binding methyltransferase superfamily. TrmB family.

The catalysed reaction is guanosine(46) in tRNA + S-adenosyl-L-methionine = N(7)-methylguanosine(46) in tRNA + S-adenosyl-L-homocysteine. Its pathway is tRNA modification; N(7)-methylguanine-tRNA biosynthesis. Functionally, catalyzes the formation of N(7)-methylguanine at position 46 (m7G46) in tRNA. This is tRNA (guanine-N(7)-)-methyltransferase from Mycoplasma pneumoniae (strain ATCC 29342 / M129 / Subtype 1) (Mycoplasmoides pneumoniae).